The primary structure comprises 190 residues: B3 domain-containing protein At4g01580 (190 aa).

Positions 1–25 (MVITRNMKARATSVSHRQSQQDPES) are disordered. A compositionally biased stretch (polar residues) spans 12–23 (TSVSHRQSQQDP). The TF-B3 DNA-binding region spans 29 to 122 (KFFKLVLPST…SFRVIIFNAS (94 aa)).

The protein localises to the nucleus. This Arabidopsis thaliana (Mouse-ear cress) protein is B3 domain-containing protein At4g01580.